The primary structure comprises 557 residues: Dihydroxy-acid dehydratase (557 aa).

C50 lines the [2Fe-2S] cluster pocket. Position 82 (D82) interacts with Mg(2+). C123 serves as a coordination point for [2Fe-2S] cluster. The Mg(2+) site is built by D124 and K125. N6-carboxylysine is present on K125. [2Fe-2S] cluster is bound at residue C195. E447 lines the Mg(2+) pocket. The active-site Proton acceptor is S473.

The protein belongs to the IlvD/Edd family. In terms of assembly, homodimer. [2Fe-2S] cluster serves as cofactor. Requires Mg(2+) as cofactor.

It catalyses the reaction (2R)-2,3-dihydroxy-3-methylbutanoate = 3-methyl-2-oxobutanoate + H2O. It carries out the reaction (2R,3R)-2,3-dihydroxy-3-methylpentanoate = (S)-3-methyl-2-oxopentanoate + H2O. Its pathway is amino-acid biosynthesis; L-isoleucine biosynthesis; L-isoleucine from 2-oxobutanoate: step 3/4. It participates in amino-acid biosynthesis; L-valine biosynthesis; L-valine from pyruvate: step 3/4. Functions in the biosynthesis of branched-chain amino acids. Catalyzes the dehydration of (2R,3R)-2,3-dihydroxy-3-methylpentanoate (2,3-dihydroxy-3-methylvalerate) into 2-oxo-3-methylpentanoate (2-oxo-3-methylvalerate) and of (2R)-2,3-dihydroxy-3-methylbutanoate (2,3-dihydroxyisovalerate) into 2-oxo-3-methylbutanoate (2-oxoisovalerate), the penultimate precursor to L-isoleucine and L-valine, respectively. The protein is Dihydroxy-acid dehydratase of Nitrosomonas eutropha (strain DSM 101675 / C91 / Nm57).